A 212-amino-acid polypeptide reads, in one-letter code: uncharacterized protein (212 aa).

Residues G53, E74, and D97 each contribute to the S-adenosyl-L-methionine site.

Belongs to the methyltransferase superfamily. YrrT family.

Could be a S-adenosyl-L-methionine-dependent methyltransferase. This is an uncharacterized protein from Bacillus cereus (strain 03BB102).